A 612-amino-acid chain; its full sequence is Phosphoenolpyruvate carboxykinase [GTP] (612 aa).

Substrate is bound by residues Arg-82 and Tyr-221 to Gly-223. Residues Lys-230 and His-250 each coordinate Mn(2+). Ser-272 serves as a coordination point for substrate. Position 273 to 278 (Ala-273 to Asn-278) interacts with GTP. Residue Cys-274 is part of the active site. A Mn(2+)-binding site is contributed by Asp-297. Asn-388 to Arg-390 is a substrate binding site. GTP is bound by residues Arg-390, Arg-421, and Phe-516–Asn-519.

Belongs to the phosphoenolpyruvate carboxykinase [GTP] family. Monomer. The cofactor is Mn(2+).

It localises to the cytoplasm. It catalyses the reaction oxaloacetate + GTP = phosphoenolpyruvate + GDP + CO2. It participates in carbohydrate biosynthesis; gluconeogenesis. Its function is as follows. Catalyzes the conversion of oxaloacetate (OAA) to phosphoenolpyruvate (PEP), the rate-limiting step in the metabolic pathway that produces glucose from lactate and other precursors derived from the citric acid cycle. In Corynebacterium efficiens (strain DSM 44549 / YS-314 / AJ 12310 / JCM 11189 / NBRC 100395), this protein is Phosphoenolpyruvate carboxykinase [GTP].